A 452-amino-acid polypeptide reads, in one-letter code: Pup--protein ligase (452 aa).

Glutamate 9 contacts Mg(2+). Residue arginine 53 coordinates ATP. Tyrosine 55 is a binding site for Mg(2+). The active-site Proton acceptor is the aspartate 57. Glutamate 63 contributes to the Mg(2+) binding site. Positions 66 and 419 each coordinate ATP.

Belongs to the Pup ligase/Pup deamidase family. Pup-conjugating enzyme subfamily.

The catalysed reaction is ATP + [prokaryotic ubiquitin-like protein]-L-glutamate + [protein]-L-lysine = ADP + phosphate + N(6)-([prokaryotic ubiquitin-like protein]-gamma-L-glutamyl)-[protein]-L-lysine.. The protein operates within protein degradation; proteasomal Pup-dependent pathway. It functions in the pathway protein modification; protein pupylation. Functionally, catalyzes the covalent attachment of the prokaryotic ubiquitin-like protein modifier Pup to the proteasomal substrate proteins, thereby targeting them for proteasomal degradation. This tagging system is termed pupylation. The ligation reaction involves the side-chain carboxylate of the C-terminal glutamate of Pup and the side-chain amino group of a substrate lysine. This chain is Pup--protein ligase, found in Acidothermus cellulolyticus (strain ATCC 43068 / DSM 8971 / 11B).